A 1234-amino-acid polypeptide reads, in one-letter code: Stress response protein NST1 (1234 aa).

Composition is skewed to polar residues over residues M1–R10 and Y21–E31. Disordered regions lie at residues M1 to V70, K149 to A175, Q246 to R283, T513 to K608, K661 to N816, P924 to S945, and G1214 to N1234. Positions N39–K51 are enriched in basic residues. Residues N161–A175 are compositionally biased toward low complexity. Basic and acidic residues-rich tracts occupy residues E263–H273 and T513–A527. Composition is skewed to acidic residues over residues E555 to V587 and A596 to E605. Residues K633–P826 are a coiled coil. Composition is skewed to basic and acidic residues over residues K661–K670 and A679–Q806. Composition is skewed to low complexity over residues S929–S941 and G1214–G1227.

It belongs to the NST1 family.

It is found in the cytoplasm. Its function is as follows. May act as a negative regulator of salt tolerance. The chain is Stress response protein NST1 (NST1) from Scheffersomyces stipitis (strain ATCC 58785 / CBS 6054 / NBRC 10063 / NRRL Y-11545) (Yeast).